We begin with the raw amino-acid sequence, 88 residues long: Otospiralin (88 aa).

The signal sequence occupies residues 1 to 21 (MQACMVPGLALCLLLGSLTEA).

It belongs to the otospiralin family. Ear specific.

It is found in the secreted. Its function is as follows. May be essential for the survival of the neurosensory epithelium of the inner ear. This is Otospiralin (OTOS) from Cavia porcellus (Guinea pig).